We begin with the raw amino-acid sequence, 265 residues long: Transcription factor LBX1 (265 aa).

A compositionally biased stretch (basic and acidic residues) spans 1-20 (MTSKDEAKSSSVEERRRHAL). The interval 1 to 33 (MTSKDEAKSSSVEERRRHALDLLPPPANSNKPL) is disordered. Positions 125-184 (RRKSRTAFTNHQIYELEKRFLYQKYLSPADRDQIAQQLGLTNAQVITWFQNRRAKLKRDL) form a DNA-binding region, homeobox. Residues 212-265 (EEETNSVRDDSRSRSPQLGLSGHMPLSPSSPLTEQHTSKECSEDEEDVEIDVDD) form a disordered region. Residues 253–265 (SEDEEDVEIDVDD) show a composition bias toward acidic residues.

It is found in the nucleus. Its function is as follows. Transcription factor that controls hypaxial muscle development by down-regulating myod1 and cdkn1b/p27, thereby allowing myoblasts to proliferate before the onset of terminal differentiation. This is Transcription factor LBX1 from Xenopus tropicalis (Western clawed frog).